Consider the following 461-residue polypeptide: Protein ultraspiracle homolog (461 aa).

A modulating region spans residues 1 to 112 (MSSVAKKDKR…NHPLSGSKHL (112 aa)). The interval 26–51 (PAPHQQQSMPSSQPSNFLQPLATPST) is disordered. Low complexity predominate over residues 27-40 (APHQQQSMPSSQPS). Over residues 41–51 (NFLQPLATPST) the composition is skewed to polar residues. NR C4-type zinc fingers lie at residues 113–133 (CSIC…CEGC) and 149–173 (CRED…YQKC). The nuclear receptor DNA-binding region spans 113–185 (CSICGDRASG…CGMKREAVQE (73 aa)). The hinge stretch occupies residues 185–192 (EERQRAAR). Residues 203 to 452 (VQELSIERLL…SYIHDALRNH (250 aa)) enclose the NR LBD domain.

It belongs to the nuclear hormone receptor family. NR2 subfamily. Heterodimer of USP and ECR. Only the heterodimer is capable of high-affinity binding to ecdysone.

The protein localises to the nucleus. Its function is as follows. Receptor for ecdysone. May be an important modulator of insect metamorphosis. This chain is Protein ultraspiracle homolog (USP), found in Manduca sexta (Tobacco hawkmoth).